We begin with the raw amino-acid sequence, 593 residues long: Elongation factor 4 (593 aa).

The 180-residue stretch at 2–181 (KNIRNFCIIA…AVVERIPHPT (180 aa)) folds into the tr-type G domain. GTP is bound by residues 14-19 (DHGKST) and 128-131 (NKCD).

The protein belongs to the TRAFAC class translation factor GTPase superfamily. Classic translation factor GTPase family. LepA subfamily.

It is found in the cell inner membrane. The enzyme catalyses GTP + H2O = GDP + phosphate + H(+). Required for accurate and efficient protein synthesis under certain stress conditions. May act as a fidelity factor of the translation reaction, by catalyzing a one-codon backward translocation of tRNAs on improperly translocated ribosomes. Back-translocation proceeds from a post-translocation (POST) complex to a pre-translocation (PRE) complex, thus giving elongation factor G a second chance to translocate the tRNAs correctly. Binds to ribosomes in a GTP-dependent manner. The sequence is that of Elongation factor 4 from Phocaeicola vulgatus (strain ATCC 8482 / DSM 1447 / JCM 5826 / CCUG 4940 / NBRC 14291 / NCTC 11154) (Bacteroides vulgatus).